We begin with the raw amino-acid sequence, 277 residues long: Phosphonoacetaldehyde hydrolase (277 aa).

The Nucleophile role is filled by aspartate 20. Mg(2+) contacts are provided by aspartate 20 and alanine 22. Residue lysine 61 is the Schiff-base intermediate with substrate of the active site. Position 194 (aspartate 194) interacts with Mg(2+).

The protein belongs to the HAD-like hydrolase superfamily. PhnX family. Homodimer. It depends on Mg(2+) as a cofactor.

It catalyses the reaction phosphonoacetaldehyde + H2O = acetaldehyde + phosphate + H(+). Involved in phosphonate degradation. This chain is Phosphonoacetaldehyde hydrolase, found in Syntrophobacter fumaroxidans (strain DSM 10017 / MPOB).